The following is a 386-amino-acid chain: Synaptotagmin-5 (386 aa).

Over residues 1–16 the composition is skewed to pro residues; the sequence is MFPEPPTLGSPAPKTP. Residues 1 to 21 form a disordered region; the sequence is MFPEPPTLGSPAPKTPPDSSR. Residues 1 to 24 lie on the Vesicular side of the membrane; that stretch reads MFPEPPTLGSPAPKTPPDSSRIRQ. Residues 25–45 form a helical membrane-spanning segment; the sequence is GAVPAWVLATIVLGSGLLVFS. Residues 46–386 lie on the Cytoplasmic side of the membrane; it reads SCFCLYRKRC…PDRARPIPAP (341 aa). C2 domains follow at residues 108 to 227 and 239 to 372; these read QLGR…QAWR and KLGD…AQWH. Ca(2+) is bound by residues leucine 138, aspartate 139, aspartate 145, aspartate 197, phenylalanine 198, aspartate 199, serine 202, aspartate 205, aspartate 270, aspartate 276, aspartate 330, and aspartate 332.

Belongs to the synaptotagmin family. In terms of assembly, homodimer. Interacts with both alpha- and beta-tubulin. It depends on Ca(2+) as a cofactor.

It localises to the cytoplasmic vesicle. Its subcellular location is the secretory vesicle. It is found in the synaptic vesicle membrane. The protein localises to the recycling endosome membrane. Its function is as follows. May be involved in Ca(2+)-dependent exocytosis of secretory vesicles through Ca(2+) and phospholipid binding to the C2 domain or may serve as Ca(2+) sensors in the process of vesicular trafficking and exocytosis. Regulates the Ca(2+)-dependent secretion of norepinephrine in PC12 cells. Required for export from the endocytic recycling compartment to the cell surface. The protein is Synaptotagmin-5 (Syt5) of Mus musculus (Mouse).